Consider the following 395-residue polypeptide: Mevalonate kinase (395 aa).

Residues K13, N55, N104, S135, and 140 to 146 (GAGLGSS) contribute to the ATP site. Residue S146 is the Proton donor of the active site. S146 and E193 together coordinate Mg(2+). The active-site Proton acceptor is D204.

This sequence belongs to the GHMP kinase family. Mevalonate kinase subfamily. Homodimer. The cofactor is Mg(2+).

Its subcellular location is the cytoplasm. It is found in the peroxisome. It carries out the reaction (R)-mevalonate + ATP = (R)-5-phosphomevalonate + ADP + H(+). It participates in isoprenoid biosynthesis; isopentenyl diphosphate biosynthesis via mevalonate pathway; isopentenyl diphosphate from (R)-mevalonate: step 1/3. With respect to regulation, farnesyl pyrophosphate and geranyl pyrophosphate inhibit mevalonate kinase activity by binding competitively at the ATP-binding sites. Catalyzes the phosphorylation of mevalonate to mevalonate 5-phosphate, a key step in isoprenoid and cholesterol biosynthesis. The polypeptide is Mevalonate kinase (Mus musculus (Mouse)).